Here is a 253-residue protein sequence, read N- to C-terminus: Blue-light photoreceptor (253 aa).

The PAS domain occupies 6-79 (QFDVILKALN…AKIRHAINEK (74 aa)). C56 carries the S-4a-FMN cysteine modification. One can recognise a PAC domain in the interval 80 to 133 (STANVLLKNYRKDGTSFMNELTIEPIYDDHEHLYFVGIQKDVTTEHDYQLELEK). Residues 142 to 253 (STPIVPIKEN…STIKEALQFY (112 aa)) form the STAS domain.

Post-translationally, FMN binds covalently to cysteine after exposure to blue light and this bond is spontaneously broken in the dark.

Its function is as follows. Exhibits the same spectroscopical features and blue-light induced photochemistry as plants phototropins, with the reversible formation of a blue-shifted photoproduct, assigned to an FMN-cysteine thiol adduct. Positive regulator in the activation of the general stress transcription factor sigma-B. This is Blue-light photoreceptor from Listeria monocytogenes serovar 1/2a (strain ATCC BAA-679 / EGD-e).